The primary structure comprises 417 residues: Probable sugar-binding periplasmic protein (417 aa).

The signal sequence occupies residues Met-1 to Ala-21.

Belongs to the bacterial solute-binding protein 1 family.

The protein localises to the periplasm. Part of a binding-protein-dependent transport system for a sugar. The sequence is that of Probable sugar-binding periplasmic protein from Mesorhizobium japonicum (strain LMG 29417 / CECT 9101 / MAFF 303099) (Mesorhizobium loti (strain MAFF 303099)).